A 176-amino-acid polypeptide reads, in one-letter code: MSRVAKAPVAIPAGVEVTLNEQTITVKGAKGSLTRVINADVSVVVENNEIKCSPAEGVTSAAQAGTARALINNMVVGVNEGFERKLTLVGVGYRAKIAGNGIDLTLGFSHPLVHQLPDGVTAECPSQTEIVLKSTDKQLVGQVAAEIRGYRPPEPYKGKGVRYADEQVRRKEAKKK.

Residues 151 to 170 (RPPEPYKGKGVRYADEQVRR) show a composition bias toward basic and acidic residues. The disordered stretch occupies residues 151-176 (RPPEPYKGKGVRYADEQVRRKEAKKK).

It belongs to the universal ribosomal protein uL6 family. Part of the 50S ribosomal subunit.

In terms of biological role, this protein binds to the 23S rRNA, and is important in its secondary structure. It is located near the subunit interface in the base of the L7/L12 stalk, and near the tRNA binding site of the peptidyltransferase center. This Shewanella loihica (strain ATCC BAA-1088 / PV-4) protein is Large ribosomal subunit protein uL6.